A 773-amino-acid chain; its full sequence is Membrane-bound aldehyde dehydrogenase [pyrroloquinoline-quinone] (773 aa).

The segment at residues 1–44 is a signal peptide (tat-type signal); it reads MGRLNRFRLGKDGRREQASLSRRGFLVTSLGAGVMFGFARPSSA.

Requires pyrroloquinoline quinone as cofactor. In terms of processing, predicted to be exported by the Tat system. The position of the signal peptide cleavage has been experimentally proven.

It is found in the cell inner membrane. It carries out the reaction an aldehyde + a quinone + H2O = a quinol + a carboxylate + H(+). The chain is Membrane-bound aldehyde dehydrogenase [pyrroloquinoline-quinone] from Gluconacetobacter polyoxogenes (Acetobacter polyoxogenes).